We begin with the raw amino-acid sequence, 398 residues long: Sphingosine 1-phosphate receptor 5 (398 aa).

The Extracellular segment spans residues 1-40 (MEPGLLRPAPVSEVIVLHYNYTGKLRGARYQPGAGLRADA). Asn20 is a glycosylation site (N-linked (GlcNAc...) asparagine). The chain crosses the membrane as a helical span at residues 41 to 61 (VVCLAVCALIVLENLAVLVVL). Topologically, residues 62–70 (GRHPRFHAP) are cytoplasmic. A helical transmembrane segment spans residues 71–91 (MFLLLGSLTLSDLLAGAAYAA). Residues 92–111 (NILLSGPLTLRLSPALWFAR) lie on the Extracellular side of the membrane. A helical transmembrane segment spans residues 112 to 132 (EGGVFVALAASVLSLLAIALE). At 133-151 (RLLTMERRGPAPAARRGRT) the chain is on the cytoplasmic side. The chain crosses the membrane as a helical span at residues 152–172 (LALAAGAWGVSLLLGLLPALG). Over 173-191 (WNCLGRLEACSTVLPLYAK) the chain is Extracellular. A helical membrane pass occupies residues 192–212 (AYVLFCVLAFVGILAAICGLY). The Cytoplasmic segment spans residues 213 to 252 (ARIYCQVRAKAQRLRARPGAGEGTSARARGTPRSLALLRT). A helical transmembrane segment spans residues 253–273 (LSVVLVAFVACWGPLFLLLLL). The Extracellular segment spans residues 274-287 (DVACPARACPVLLQ). A helical membrane pass occupies residues 288–308 (ADPFLGLAMANSLLNPIIYTF). The Cytoplasmic segment spans residues 309-398 (TNRDLRHALL…QTLVPPPAAD (90 aa)). Cys323 is lipidated: S-palmitoyl cysteine. The interval 332 to 398 (SGTSRSPGST…QTLVPPPAAD (67 aa)) is disordered. Positions 334 to 343 (TSRSPGSTLG) are enriched in low complexity. The residue at position 337 (Ser337) is a Phosphoserine. Residues 359-373 (SSSRSERSSPQRDGL) are compositionally biased toward basic and acidic residues. Ser381 bears the Phosphoserine mark.

It belongs to the G-protein coupled receptor 1 family.

It is found in the cell membrane. Receptor for the lysosphingolipid sphingosine 1-phosphate (S1P). S1P is a bioactive lysophospholipid that elicits diverse physiological effect on most types of cells and tissues. Is coupled to both the G(i/O)alpha and G(12) subclass of heteromeric G-proteins. The sequence is that of Sphingosine 1-phosphate receptor 5 (S1PR5) from Sus scrofa (Pig).